The chain runs to 26 residues: Dermaseptin-J2 (26 aa).

Val26 bears the Valine amide mark.

In terms of tissue distribution, expressed by the skin glands.

It localises to the secreted. Its function is as follows. Has antimicrobial activity. This is Dermaseptin-J2 from Phasmahyla jandaia (Jandaia leaf frog).